We begin with the raw amino-acid sequence, 288 residues long: S-methyl-5'-thioadenosine phosphorylase (288 aa).

Residues Ser-10, 52–53, and 85–86 contribute to the phosphate site; these read RH and TA. Position 188 (Met-188) interacts with substrate. A phosphate-binding site is contributed by Thr-189. 212–214 contacts substrate; sequence DYD.

Belongs to the PNP/MTAP phosphorylase family. MTAP subfamily. Homotrimer.

It is found in the cytoplasm. The protein localises to the nucleus. It carries out the reaction S-methyl-5'-thioadenosine + phosphate = 5-(methylsulfanyl)-alpha-D-ribose 1-phosphate + adenine. Its pathway is amino-acid biosynthesis; L-methionine biosynthesis via salvage pathway; S-methyl-5-thio-alpha-D-ribose 1-phosphate from S-methyl-5'-thioadenosine (phosphorylase route): step 1/1. In terms of biological role, catalyzes the reversible phosphorylation of S-methyl-5'-thioadenosine (MTA) to adenine and 5-methylthioribose-1-phosphate. Involved in the breakdown of MTA, a major by-product of polyamine biosynthesis. Responsible for the first step in the methionine salvage pathway after MTA has been generated from S-adenosylmethionine. Has broad substrate specificity with 6-aminopurine nucleosides as preferred substrates. This is S-methyl-5'-thioadenosine phosphorylase from Caenorhabditis elegans.